The primary structure comprises 60 residues: Potassium channel toxin ImKTx88 (60 aa).

A signal peptide spans M1–A22. 3 disulfide bridges follow: C30–C51, C36–C56, and C40–C58.

It belongs to the short scorpion toxin superfamily. Potassium channel inhibitor family. As to expression, expressed by the venom gland.

It is found in the secreted. In terms of biological role, recombinant toxin selectively inhibits Kv1.3/KCNA3 potassium channels with an IC(50) of 91 pM. In Isometrus maculatus (Lesser brown scorpion), this protein is Potassium channel toxin ImKTx88.